Reading from the N-terminus, the 174-residue chain is Phytochrome-interacting ankyrin-repeat protein 2 (174 aa).

Low complexity predominate over residues 1-13; sequence MLQEPSAAFSLRR. Positions 1–29 are disordered; it reads MLQEPSAAFSLRRNSFRRRSPRSNVDDRG. Position 15 is a phosphoserine (S15). 3 ANK repeats span residues 28–57, 65–94, and 100–129; these read RGWNPLHIKARKGDLKSVKQLLDQGMDVNA, KGVSALHLAAEGGHIEVMDLLLERGANIDA, and CGWTPLHAAAKERKREAVKFLVENGAFLAD.

As to quaternary structure, interacts with phytochrome A (PHYA), both in Pr and Pfr forms. Binds to PIF3, a repressor of photomorphogenesis in response to phytochrome-mediated light signaling; this interaction may trigger the repression of PHYA-mediated PIF3 phosphorylation. Interacts with SIGE/SIG5 in mitochondrion. Interacts with RPS9M (via C terminus). In terms of processing, phosphorylated by PHYA. Mostly expressed in flowers, cotyledons, leaves and siliques, and, to a lower extent, in roots and stems. Also detected at low levels in seedlings grown in continuous dark or light conditions. Expressed in male and female gametophytes.

It localises to the cytoplasm. Its subcellular location is the nucleus. It is found in the mitochondrion. In terms of biological role, promotes anthocyanin accumulation through interaction with PHYA, especially in response to far-red light, high light and sucrose treatment, probably by triggering A3G2XYLT/UF3GT expression. Required for gametophytes development as well as male-female gamete recognition during fertilization, possibly by regulating mitochondrial gene expression. Represses PHYA-mediated PIF3 phosphorylation. This Arabidopsis thaliana (Mouse-ear cress) protein is Phytochrome-interacting ankyrin-repeat protein 2.